The sequence spans 967 residues: Phosphatidylserine decarboxylase proenzyme 3 (967 aa).

The segment at 217-255 is disordered; sequence FIAEPDSSIPPSESSVSISTDTGKETPPSKSKKSSNQPY. Residues 220–237 show a composition bias toward low complexity; that stretch reads EPDSSIPPSESSVSISTD. Positions 250–373 constitute a C2 domain; sequence SSNQPYVSIG…SSAQVDPETG (124 aa). 3 residues coordinate Ca(2+): Asp343, Ser346, and Asp349. The span at 532 to 544 shows a compositional bias: low complexity; that stretch reads DQQATQTPQSPSS. Residues 532-566 are disordered; sequence DQQATQTPQSPSSNEESGPGTPTQTSDQYEDSEDS. A compositionally biased stretch (polar residues) spans 545 to 558; sequence NEESGPGTPTQTSD. Catalysis depends on charge relay system; for autoendoproteolytic cleavage activity residues Asp769, His825, and Ser912. Ser912 functions as the Schiff-base intermediate with substrate; via pyruvic acid; for decarboxylase activity in the catalytic mechanism. The residue at position 912 (Ser912) is a Pyruvic acid (Ser); by autocatalysis. The disordered stretch occupies residues 947 to 967; the sequence is IGQKIDPNKPTDAEDHSKSDS.

It belongs to the phosphatidylserine decarboxylase family. PSD-B subfamily. Eukaryotic type II sub-subfamily. As to quaternary structure, heterodimer of a large membrane-associated beta subunit and a small pyruvoyl-containing alpha subunit. Pyruvate serves as cofactor. It depends on Ca(2+) as a cofactor. Post-translationally, is synthesized initially as an inactive proenzyme. Formation of the active enzyme involves a self-maturation process in which the active site pyruvoyl group is generated from an internal serine residue via an autocatalytic post-translational modification. Two non-identical subunits are generated from the proenzyme in this reaction, and the pyruvate is formed at the N-terminus of the alpha chain, which is derived from the carboxyl end of the proenzyme. The autoendoproteolytic cleavage occurs by a canonical serine protease mechanism, in which the side chain hydroxyl group of the serine supplies its oxygen atom to form the C-terminus of the beta chain, while the remainder of the serine residue undergoes an oxidative deamination to produce ammonia and the pyruvoyl prosthetic group on the alpha chain. During this reaction, the Ser that is part of the protease active site of the proenzyme becomes the pyruvoyl prosthetic group, which constitutes an essential element of the active site of the mature decarboxylase.

Its subcellular location is the golgi apparatus membrane. It localises to the endosome membrane. The protein resides in the cytoplasm. It catalyses the reaction a 1,2-diacyl-sn-glycero-3-phospho-L-serine + H(+) = a 1,2-diacyl-sn-glycero-3-phosphoethanolamine + CO2. The protein operates within phospholipid metabolism; phosphatidylethanolamine biosynthesis; phosphatidylethanolamine from CDP-diacylglycerol: step 2/2. Functionally, catalyzes the formation of phosphatidylethanolamine (PtdEtn) from phosphatidylserine (PtdSer). Plays a central role in phospholipid metabolism and in the interorganelle trafficking of phosphatidylserine. Together with psd1 and psd2, responsible for the majority of phosphatidylethanolamine synthesis. This chain is Phosphatidylserine decarboxylase proenzyme 3, found in Schizosaccharomyces pombe (strain 972 / ATCC 24843) (Fission yeast).